A 122-amino-acid chain; its full sequence is Copper metallothionein 1 (122 aa).

The interval 1-35 is cys-rich copper-binding 1; sequence MACNCPPQKNTACCSTSEAQDKCTCQKGNCECKAC. Residues 36 to 50 form a spacer B1 region; the sequence is PNSTKTSESGGKAST. Residues 51–72 form a cys-rich copper-binding 2 region; sequence CNCGGSGEACTCPPGQCACDKC. Residues 73 to 81 are spacer B2; sequence PKKAKSVST. The tract at residues 82–103 is cys-rich copper-binding 3; that stretch reads CGCGGSGAACSCPPGKCACDNC. Residues 104–113 form a spacer B3 region; sequence PKQAQEKVSS. The segment at 114–122 is cys-rich copper-binding 4; that stretch reads CACSGSGAA.

It belongs to the metallothionein superfamily.

The protein resides in the cytoplasm. Its subcellular location is the cell cortex. Its function is as follows. Copper metallothionein that protects the cell against copper toxicity by tightly chelating copper ions. Required for antioxidant-mediated growth rescue in the presence of fluconazole. Acts as a critical factors for lung colonization and virulence. This Cryptococcus neoformans var. grubii serotype A (strain H99 / ATCC 208821 / CBS 10515 / FGSC 9487) (Filobasidiella neoformans var. grubii) protein is Copper metallothionein 1.